The chain runs to 718 residues: ATP-dependent RNA helicase homolog DQX1 (718 aa).

The Helicase ATP-binding domain occupies 54–222 (HLESSPTGVV…WGNSPIVRVP (169 aa)). 67–74 (GDPGSGKS) serves as a coordination point for ATP. The DEAQ box signature appears at 167 to 170 (DEAQ). The Helicase C-terminal domain maps to 245-447 (ACQAVLELCQ…ALMRALEDLD (203 aa)). Residues 690 to 718 (QLREGTAEPPAAATETSSPQEYGDGCVLQ) form a disordered region. Residues 696–708 (AEPPAAATETSSP) show a composition bias toward low complexity.

As to expression, ubiquitous.

It is found in the nucleus. Functionally, might be involved in RNA metabolism; it is missing helicase motif III and may not have helicase activity. The chain is ATP-dependent RNA helicase homolog DQX1 (Dqx1) from Mus musculus (Mouse).